The chain runs to 356 residues: Protein RecA (356 aa).

75–82 (GPESSGKT) contacts ATP.

The protein belongs to the RecA family.

The protein localises to the cytoplasm. In terms of biological role, can catalyze the hydrolysis of ATP in the presence of single-stranded DNA, the ATP-dependent uptake of single-stranded DNA by duplex DNA, and the ATP-dependent hybridization of homologous single-stranded DNAs. It interacts with LexA causing its activation and leading to its autocatalytic cleavage. The protein is Protein RecA of Burkholderia mallei (strain ATCC 23344).